The primary structure comprises 918 residues: Protein translocase subunit SecA (918 aa).

ATP is bound by residues glutamine 87, 105–109 (GEGKT), and aspartate 516. Residues cysteine 902, cysteine 904, cysteine 913, and histidine 914 each coordinate Zn(2+).

Belongs to the SecA family. As to quaternary structure, monomer and homodimer. Part of the essential Sec protein translocation apparatus which comprises SecA, SecYEG and auxiliary proteins SecDF-YajC and YidC. Requires Zn(2+) as cofactor.

It is found in the cell inner membrane. It localises to the cytoplasm. The catalysed reaction is ATP + H2O + cellular proteinSide 1 = ADP + phosphate + cellular proteinSide 2.. Functionally, part of the Sec protein translocase complex. Interacts with the SecYEG preprotein conducting channel. Has a central role in coupling the hydrolysis of ATP to the transfer of proteins into and across the cell membrane, serving both as a receptor for the preprotein-SecB complex and as an ATP-driven molecular motor driving the stepwise translocation of polypeptide chains across the membrane. This Methylibium petroleiphilum (strain ATCC BAA-1232 / LMG 22953 / PM1) protein is Protein translocase subunit SecA.